Consider the following 305-residue polypeptide: Porphobilinogen deaminase (305 aa).

At Cys-243 the chain carries S-(dipyrrolylmethanemethyl)cysteine.

Belongs to the HMBS family. Monomer. Dipyrromethane is required as a cofactor.

The catalysed reaction is 4 porphobilinogen + H2O = hydroxymethylbilane + 4 NH4(+). The protein operates within porphyrin-containing compound metabolism; protoporphyrin-IX biosynthesis; coproporphyrinogen-III from 5-aminolevulinate: step 2/4. Functionally, tetrapolymerization of the monopyrrole PBG into the hydroxymethylbilane pre-uroporphyrinogen in several discrete steps. The chain is Porphobilinogen deaminase from Limosilactobacillus reuteri (strain DSM 20016) (Lactobacillus reuteri).